Reading from the N-terminus, the 311-residue chain is Aspartate carbamoyltransferase catalytic subunit (311 aa).

Positions 55 and 56 each coordinate carbamoyl phosphate. K85 contacts L-aspartate. Residues R106, H135, and Q138 each contribute to the carbamoyl phosphate site. Positions 168 and 230 each coordinate L-aspartate. Carbamoyl phosphate contacts are provided by L268 and P269.

The protein belongs to the aspartate/ornithine carbamoyltransferase superfamily. ATCase family. Heterododecamer (2C3:3R2) of six catalytic PyrB chains organized as two trimers (C3), and six regulatory PyrI chains organized as three dimers (R2).

The enzyme catalyses carbamoyl phosphate + L-aspartate = N-carbamoyl-L-aspartate + phosphate + H(+). It functions in the pathway pyrimidine metabolism; UMP biosynthesis via de novo pathway; (S)-dihydroorotate from bicarbonate: step 2/3. Its function is as follows. Catalyzes the condensation of carbamoyl phosphate and aspartate to form carbamoyl aspartate and inorganic phosphate, the committed step in the de novo pyrimidine nucleotide biosynthesis pathway. The protein is Aspartate carbamoyltransferase catalytic subunit of Pectobacterium carotovorum subsp. carotovorum (strain PC1).